We begin with the raw amino-acid sequence, 258 residues long: Hydroxyacylglutathione hydrolase (258 aa).

Residues His52, His54, Asp56, His57, His109, Asp126, and His164 each coordinate Zn(2+).

This sequence belongs to the metallo-beta-lactamase superfamily. Glyoxalase II family. Monomer. Requires Zn(2+) as cofactor.

It carries out the reaction an S-(2-hydroxyacyl)glutathione + H2O = a 2-hydroxy carboxylate + glutathione + H(+). It functions in the pathway secondary metabolite metabolism; methylglyoxal degradation; (R)-lactate from methylglyoxal: step 2/2. Functionally, thiolesterase that catalyzes the hydrolysis of S-D-lactoyl-glutathione to form glutathione and D-lactic acid. This Xylella fastidiosa (strain M12) protein is Hydroxyacylglutathione hydrolase.